We begin with the raw amino-acid sequence, 217 residues long: MKIVIADDHAVVRTGFSMILNYQNDMEVVATAADGVEAYQKVMEYKPDVLLMDLSMPPGESGLIATSKIADSFPETKILILTMFDDEEYLFHVLRNGAKGYILKNAPDEQLLLAIRTVYKGETYVDMKLTTSLVNEFVSNSNQDTANTSDPFKILSKRELEILPLIAKGYGNKEIAEKLFVSVKTVEAHKTHIMTKLGLKSKPELVEYALKKKLLEF.

Residues 2–119 (KIVIADDHAV…QLLLAIRTVY (118 aa)) form the Response regulatory domain. Asp53 is subject to 4-aspartylphosphate. The region spanning 148-213 (TSDPFKILSK…ELVEYALKKK (66 aa)) is the HTH luxR-type domain. Residues 172–191 (NKEIAEKLFVSVKTVEAHKT) constitute a DNA-binding region (H-T-H motif).

In terms of processing, phosphorylated by NreB.

It is found in the cytoplasm. In terms of biological role, member of the two-component regulatory system NreB/NreC involved in the control of dissimilatory nitrate/nitrite reduction in response to oxygen. Phosphorylated NreC binds to a GC-rich palindromic sequence at the promoters of the nitrate (narGHJI) and nitrite (nir) reductase operons, as well as the putative nitrate transporter gene narT, and activates their expression. The protein is Oxygen regulatory protein NreC (nreC) of Staphylococcus aureus (strain bovine RF122 / ET3-1).